Consider the following 675-residue polypeptide: Dihydrolipoyllysine-residue acetyltransferase component of pyruvate dehydrogenase complex (675 aa).

Positions 2–77 (AFSVEMPELG…DVGGVIAIIG (76 aa)) constitute a Lipoyl-binding 1 domain. Position 43 is an N6-lipoyllysine (lysine 43). The tract at residues 77–124 (GDADETPANEAPADEAPAPAEEEEPVKEEPKKEAAPEAPAATGAATDV) is disordered. 2 stretches are compositionally biased toward low complexity: residues 84-95 (ANEAPADEAPAP) and 112-124 (PEAPAATGAATDV). Residues 121 to 196 (ATDVEMPELG…DVGAVIARIG (76 aa)) form the Lipoyl-binding 2 domain. Residue lysine 162 is modified to N6-lipoyllysine. The segment at 200–240 (AAAAPAEEEAAPAEEEEPVKEEPKKEAAPEAPAATGAATDV) is disordered. The span at 205–218 (AEEEAAPAEEEEPV) shows a compositional bias: acidic residues. Residues 237 to 312 (ATDVEMPELG…DVGAVIARIG (76 aa)) form the Lipoyl-binding 3 domain. The residue at position 278 (lysine 278) is an N6-lipoyllysine. The segment at 316-368 (AAAAPAEEEAAPAEEEEPVKEEPKKEEPKKEEPKKEAATTPAAASATVSASGD) is disordered. Residues 321-334 (AEEEAAPAEEEEPV) show a composition bias toward acidic residues. Positions 335-352 (KEEPKKEEPKKEEPKKEA) are enriched in basic and acidic residues. Over residues 353–366 (ATTPAAASATVSAS) the composition is skewed to low complexity. One can recognise a Peripheral subunit-binding (PSBD) domain in the interval 372 to 409 (YVTPLVRKLAEKHGVDLNTVTGTGIGGRIRKQDVLAAA). Residues histidine 645 and aspartate 649 contribute to the active site.

Belongs to the 2-oxoacid dehydrogenase family. In terms of assembly, forms a 24-polypeptide structural core with octahedral symmetry. Part of an unusual ODH/PDH supercomplex, consisting of AceE (E1), AceF (E2), and Lpd (E3) together with OdhA (E1+E2). It depends on (R)-lipoate as a cofactor.

It carries out the reaction N(6)-[(R)-dihydrolipoyl]-L-lysyl-[protein] + acetyl-CoA = N(6)-[(R)-S(8)-acetyldihydrolipoyl]-L-lysyl-[protein] + CoA. Is essential for both 2-oxoglutarate dehydrogenase (ODH) and pyruvate dehydrogenase (PDH) activities, but AceF has exclusively transacetylase (and no transsuccinylase) activity. The lipoyl residues required for ODH activity are likely provided by AceF. This Corynebacterium glutamicum (strain ATCC 13032 / DSM 20300 / JCM 1318 / BCRC 11384 / CCUG 27702 / LMG 3730 / NBRC 12168 / NCIMB 10025 / NRRL B-2784 / 534) protein is Dihydrolipoyllysine-residue acetyltransferase component of pyruvate dehydrogenase complex (aceF).